Reading from the N-terminus, the 327-residue chain is tRNA dimethylallyltransferase (327 aa).

18–25 contributes to the ATP binding site; sequence GPTASGKT. 20–25 provides a ligand contact to substrate; it reads TASGKT. Interaction with substrate tRNA stretches follow at residues 43-46, 167-171, and 251-256; these read DSAL, QRVQR, and RCVGYR.

Belongs to the IPP transferase family. In terms of assembly, monomer. The cofactor is Mg(2+).

The enzyme catalyses adenosine(37) in tRNA + dimethylallyl diphosphate = N(6)-dimethylallyladenosine(37) in tRNA + diphosphate. In terms of biological role, catalyzes the transfer of a dimethylallyl group onto the adenine at position 37 in tRNAs that read codons beginning with uridine, leading to the formation of N6-(dimethylallyl)adenosine (i(6)A). The sequence is that of tRNA dimethylallyltransferase from Methylibium petroleiphilum (strain ATCC BAA-1232 / LMG 22953 / PM1).